The primary structure comprises 249 residues: Transcription factor MYB90 (249 aa).

HTH myb-type domains follow at residues 5–57 (SKGL…LNYL) and 58–112 (KPSI…SKKH). 2 consecutive DNA-binding regions (H-T-H motif) follow at residues 33–57 (WHQV…LNYL) and 85–108 (WSLI…NTHL).

Interacts with BHLH12/MYC1, BHLH1/GL3/MYC6, BHLH2/EGL3/MYC146, and BHLH42/TT8. In terms of tissue distribution, expressed only in leaves and siliques.

It localises to the nucleus. Transcription activator, when associated with BHLH12/MYC1, EGL3, or GL3. Promotes the synthesis of phenylpropanoid-derived compounds such as anthocyanins. The sequence is that of Transcription factor MYB90 (MYB90) from Arabidopsis thaliana (Mouse-ear cress).